Reading from the N-terminus, the 193-residue chain is Interleukin-18 (193 aa).

Residues 1–36 (MAAEQVEDNCISFVEMKFINNTLYFVAENDEDLESD) constitute a propeptide that is removed on maturation.

Belongs to the IL-1 family. Forms a ternary complex with ligand-binding receptor subunit IL18R1 and signaling receptor subunit IL18RAP at the plasma membrane. Mature IL18 first binds to IL18R1 forming a low affinity binary complex, which then interacts with IL18RAP to form a high affinity ternary complex that signals inside the cell. Interacts with cargo receptor TMED10; the interaction mediates the translocation from the cytoplasm into the ERGIC (endoplasmic reticulum-Golgi intermediate compartment) and thereby secretion. The pro-IL-18 precursor is processed by CASP1, CASP4 or CASP5 to yield its mature, active form. The pro-IL-18 precursor features autoinhibitory interactions between the propeptide and the post-cleavage-site region, preventing recognition by the IL18R1 receptor. Processing by CASP1, CASP4 or CASP5 induces conformational changes to generate critical receptor-binding sites. The mature form is then secreted and released in the extracellular milieu by passing through the gasdermin-D (GSDMD) pore. In contrast, cleavage by CASP3 inactivates IL18.

The protein resides in the cytoplasm. The protein localises to the cytosol. It is found in the secreted. Pro-inflammatory cytokine primarily involved in epithelial barrier repair, polarized T-helper 1 (Th1) cell and natural killer (NK) cell immune responses. Upon binding to IL18R1 and IL18RAP, forms a signaling ternary complex which activates NF-kappa-B, triggering synthesis of inflammatory mediators. Synergizes with IL12/interleukin-12 to induce IFNG synthesis from T-helper 1 (Th1) cells and natural killer (NK) cells. Involved in transduction of inflammation downstream of pyroptosis: its mature form is specifically released in the extracellular milieu by passing through the gasdermin-D (GSDMD) pore. The chain is Interleukin-18 (IL18) from Boselaphus tragocamelus (Nilgai).